Consider the following 322-residue polypeptide: Polyisoprenyl-teichoic acid--peptidoglycan teichoic acid transferase TagT (322 aa).

At 1–19 (MEERSQRRKKKRKLKKWVK) the chain is on the cytoplasmic side. The helical; Signal-anchor for type II membrane protein transmembrane segment at 20–40 (VVAGLMAFLVIAAGSVGAYAF) threads the bilayer. Residues 41–322 (VKLNNASKEA…KKELQNDLGV (282 aa)) are Extracellular-facing.

This sequence belongs to the LytR/CpsA/Psr (LCP) family. In terms of assembly, interacts with MreB.

The protein resides in the cell membrane. Its pathway is cell wall biogenesis. Functionally, may catalyze the final step in cell wall teichoic acid biosynthesis, the transfer of the anionic cell wall polymers (APs) from their lipid-linked precursor to the cell wall peptidoglycan (PG). In Bacillus subtilis (strain 168), this protein is Polyisoprenyl-teichoic acid--peptidoglycan teichoic acid transferase TagT.